The following is a 336-amino-acid chain: MKKWFPALLFSLCVSGESSAWNNIVFYSLGDVNSYQGGNVVITQRPQFITSWRPGIATVTWNQCNGPEFADGFWAYYREYIAWVVFPKKVMTQNGYPLFIEVHNKGSWSEENTGDNDSYFFLKGYKWDERAFDAGNLCQKPGEITRLTEKFDDIIFKVALPADLPLGDYSVKIPYTSGMQRHFASYLGARFKIPYNVAKTLPRENEMLFLFKNIGGCRPSAQSLEIKHGDLSINSANNHYAAQTLSVSCDVPANIRFMLLRNTTPTYSHGKKFSVGLGHGWDSIVSVNGVDTGETTMRWYKAGTQNLTIGSRLYGESSKIQPGVLSGSATLLMILP.

A signal peptide spans 1–20 (MKKWFPALLFSLCVSGESSA). 2 cysteine pairs are disulfide-bonded: C64–C138 and C217–C249. D-galactose contacts are provided by residues E79 and 124-127 (GYKW).

It belongs to the adhesin PapG family.

It localises to the secreted. Its subcellular location is the fimbrium. In terms of biological role, tip adhesin component of type P pili that plays a critical role in kidney infection through targeted interaction with the globoseries glycolipids containing the Gal-alpha(1-4)-Gal disaccharide present on uroepithelial cells. In turn, transcriptionally regulates host gene expression in kidney cells, leading to inflammatory pathway activation and renal tissue damage. Acts thereby as key determinant of invasive uropathogenic E.coli (UPEC), which cause pyelonephritis and urinary-source bacteremia. The protein is Fimbrial adhesin PapGII of Escherichia coli.